The chain runs to 971 residues: Serine/threonine-protein kinase CLA4 (971 aa).

A disordered region spans residues 1–40; sequence MTSIYTSDLKNHRRAPPPPNGAAGSGSGSGSGSGSGSGSL. Residues 23–37 show a composition bias toward gly residues; that stretch reads AGSGSGSGSGSGSGS. A PH domain is found at 67–178; sequence SKRQSGWVHV…WLDAFTTKCP (112 aa). A disordered region spans residues 201–221; sequence LTNGSLNGNSSSSPTSGLLSS. A CRIB domain is found at 231–244; the sequence is VSGPINFTHKVHVG. 2 disordered regions span residues 292–517 and 554–653; these read GGNS…KIHP and SKKS…QLKK. Low complexity-rich tracts occupy residues 307-326 and 365-404; these read NSKT…TKNN and LNGS…PLNN. Residues 423–433 show a composition bias toward polar residues; sequence SGTSSDTYSNK. Positions 434–448 are enriched in basic and acidic residues; the sequence is NHQDRSGYEQQRQQR. A compositionally biased stretch (low complexity) spans 449-482; that stretch reads TDSSQQQQQQKQHQYQQKSQQQQQQPQQPLSSHQ. Pro residues predominate over residues 491–500; the sequence is QVPPTLPSSG. Positions 554–578 are enriched in low complexity; it reads SKKSQQQLASKQPSPPSSQQQQQKP. Residues 617 to 630 are compositionally biased toward polar residues; that stretch reads NETSGVSKTPSPTD. The region spanning 680–935 is the Protein kinase domain; it reads FRIVEKAGQG…TDELLEHSFI (256 aa). ATP contacts are provided by residues 686–694 and Lys-710; that span reads AGQGASGNV. Asp-803 (proton acceptor) is an active-site residue.

The protein belongs to the protein kinase superfamily. STE Ser/Thr protein kinase family. STE20 subfamily.

It carries out the reaction L-seryl-[protein] + ATP = O-phospho-L-seryl-[protein] + ADP + H(+). It catalyses the reaction L-threonyl-[protein] + ATP = O-phospho-L-threonyl-[protein] + ADP + H(+). Functionally, essential for virulence and morphological switching (hyphal formation) of C.albicans. The protein is Serine/threonine-protein kinase CLA4 (CLA4) of Candida albicans (Yeast).